The primary structure comprises 20 residues: Ranalexin-1Cb (20 aa).

Cys-14 and Cys-20 are joined by a disulfide.

As to expression, expressed by the skin glands.

Its subcellular location is the secreted. In terms of biological role, antibacterial activity against Gram-positive bacterium S.aureus and Gram-negative bacterium E.coli. Has activity against C.albicans. This is Ranalexin-1Cb from Lithobates clamitans (Green frog).